Here is an 89-residue protein sequence, read N- to C-terminus: Probable Fe(2+)-trafficking protein (89 aa).

It belongs to the Fe(2+)-trafficking protein family.

In terms of biological role, could be a mediator in iron transactions between iron acquisition and iron-requiring processes, such as synthesis and/or repair of Fe-S clusters in biosynthetic enzymes. The protein is Probable Fe(2+)-trafficking protein of Legionella pneumophila (strain Lens).